Here is a 137-residue protein sequence, read N- to C-terminus: Large ribosomal subunit protein uL16 (137 aa).

The span at 1-17 (MLQPKRTKFRKQMKGRN) shows a compositional bias: basic residues. A disordered region spans residues 1 to 22 (MLQPKRTKFRKQMKGRNRGLAQ).

The protein belongs to the universal ribosomal protein uL16 family. As to quaternary structure, part of the 50S ribosomal subunit.

Binds 23S rRNA and is also seen to make contacts with the A and possibly P site tRNAs. This Teredinibacter turnerae (strain ATCC 39867 / T7901) protein is Large ribosomal subunit protein uL16.